We begin with the raw amino-acid sequence, 323 residues long: tRNA N6-adenosine threonylcarbamoyltransferase (323 aa).

Fe cation-binding residues include His-110 and His-114. Substrate contacts are provided by residues 131-135 (VASGG), Asp-164, Gly-177, and Asn-264. Asp-288 is a binding site for Fe cation.

It belongs to the KAE1 / TsaD family. It depends on Fe(2+) as a cofactor.

It is found in the cytoplasm. The catalysed reaction is L-threonylcarbamoyladenylate + adenosine(37) in tRNA = N(6)-L-threonylcarbamoyladenosine(37) in tRNA + AMP + H(+). Functionally, required for the formation of a threonylcarbamoyl group on adenosine at position 37 (t(6)A37) in tRNAs that read codons beginning with adenine. Is involved in the transfer of the threonylcarbamoyl moiety of threonylcarbamoyl-AMP (TC-AMP) to the N6 group of A37, together with TsaE and TsaB. TsaD likely plays a direct catalytic role in this reaction. The chain is tRNA N6-adenosine threonylcarbamoyltransferase from Thermus thermophilus (strain ATCC BAA-163 / DSM 7039 / HB27).